Here is a 397-residue protein sequence, read N- to C-terminus: Succinate--CoA ligase [ADP-forming] subunit beta (397 aa).

Residues 9 to 254 (KALLKGYGAP…ETEEDAKEIE (246 aa)) form the ATP-grasp domain. ATP is bound by residues K46, 53-55 (GRG), E109, A112, and E117. The Mg(2+) site is built by N209 and D223. Residues N274 and 331 to 333 (GIM) contribute to the substrate site.

It belongs to the succinate/malate CoA ligase beta subunit family. In terms of assembly, heterotetramer of two alpha and two beta subunits. It depends on Mg(2+) as a cofactor.

It catalyses the reaction succinate + ATP + CoA = succinyl-CoA + ADP + phosphate. It carries out the reaction GTP + succinate + CoA = succinyl-CoA + GDP + phosphate. Its pathway is carbohydrate metabolism; tricarboxylic acid cycle; succinate from succinyl-CoA (ligase route): step 1/1. Its function is as follows. Succinyl-CoA synthetase functions in the citric acid cycle (TCA), coupling the hydrolysis of succinyl-CoA to the synthesis of either ATP or GTP and thus represents the only step of substrate-level phosphorylation in the TCA. The beta subunit provides nucleotide specificity of the enzyme and binds the substrate succinate, while the binding sites for coenzyme A and phosphate are found in the alpha subunit. The polypeptide is Succinate--CoA ligase [ADP-forming] subunit beta (Rhizobium etli (strain ATCC 51251 / DSM 11541 / JCM 21823 / NBRC 15573 / CFN 42)).